The following is a 107-amino-acid chain: Ferredoxin (107 aa).

4Fe-4S ferredoxin-type domains are found at residues 8 to 37 (ERVV…LDEN) and 38 to 67 (GKSR…KASE). Residues Cys17, Cys20, and Cys23 each coordinate [4Fe-4S] cluster. The [3Fe-4S] cluster site is built by Cys27, Cys47, and Cys53. Cys57 is a binding site for [4Fe-4S] cluster.

Monomer. The cofactor is [4Fe-4S] cluster. [3Fe-4S] cluster is required as a cofactor. The N-terminus is blocked.

Functionally, ferredoxins are iron-sulfur proteins that transfer electrons in a wide variety of metabolic reactions. The polypeptide is Ferredoxin (Pyrobaculum islandicum (strain DSM 4184 / JCM 9189 / GEO3)).